We begin with the raw amino-acid sequence, 399 residues long: V-set and immunoglobulin domain-containing protein 4 (399 aa).

The N-terminal stretch at 1-19 is a signal peptide; the sequence is MGILLGLLLLGHLTVDTYG. Residues 20-283 are Extracellular-facing; that stretch reads RPILEVPESV…TSAGPGKSLP (264 aa). Ig-like domains follow at residues 21–131 and 143–226; these read PILE…DKIT and PTVT…SDIV. Disulfide bonds link Cys-41–Cys-113 and Cys-165–Cys-211. Residues 284-304 traverse the membrane as a helical segment; it reads VFAIILIISLCCMVVFTMAYI. The Cytoplasmic portion of the chain corresponds to 305 to 399; it reads MLCRKTSQQE…FLATEGKSVC (95 aa).

In terms of tissue distribution, abundantly expressed in several fetal tissues. In adult tissues, highest expression in lung and placenta. Expressed in resting macrophages.

The protein localises to the membrane. Phagocytic receptor, strong negative regulator of T-cell proliferation and IL2 production. Potent inhibitor of the alternative complement pathway convertases. The sequence is that of V-set and immunoglobulin domain-containing protein 4 (VSIG4) from Homo sapiens (Human).